Reading from the N-terminus, the 225-residue chain is LHFPL tetraspan subfamily member 2a protein (225 aa).

The next 4 helical transmembrane spans lie at 11–31, 99–119, 129–149, and 178–198; these read MLWTLLSIVAAFSELIAFLST, IFLAAGILLLCAVAFISIFTM, IFNVCGLLQAIAGLFLIVGLV, and AGWAFYTALAGTVLCFLCAVF.

This sequence belongs to the LHFP family.

It is found in the membrane. Plays a role in fertility. Involved in distal reproductive tract development. This Danio rerio (Zebrafish) protein is LHFPL tetraspan subfamily member 2a protein.